The chain runs to 120 residues: NAD(P)H-quinone oxidoreductase subunit 3, chloroplastic (120 aa).

3 helical membrane-spanning segments follow: residues 9-29 (IFWT…WISG), 64-84 (MFAL…PWAM), and 88-108 (VLGV…VVGL).

The protein belongs to the complex I subunit 3 family. As to quaternary structure, NDH is composed of at least 16 different subunits, 5 of which are encoded in the nucleus.

It localises to the plastid. The protein localises to the chloroplast thylakoid membrane. It catalyses the reaction a plastoquinone + NADH + (n+1) H(+)(in) = a plastoquinol + NAD(+) + n H(+)(out). The enzyme catalyses a plastoquinone + NADPH + (n+1) H(+)(in) = a plastoquinol + NADP(+) + n H(+)(out). Functionally, NDH shuttles electrons from NAD(P)H:plastoquinone, via FMN and iron-sulfur (Fe-S) centers, to quinones in the photosynthetic chain and possibly in a chloroplast respiratory chain. The immediate electron acceptor for the enzyme in this species is believed to be plastoquinone. Couples the redox reaction to proton translocation, and thus conserves the redox energy in a proton gradient. The protein is NAD(P)H-quinone oxidoreductase subunit 3, chloroplastic of Lolium perenne (Perennial ryegrass).